The following is a 205-amino-acid chain: UPF0301 protein Bind_0718 (205 aa).

The protein belongs to the UPF0301 (AlgH) family.

The polypeptide is UPF0301 protein Bind_0718 (Beijerinckia indica subsp. indica (strain ATCC 9039 / DSM 1715 / NCIMB 8712)).